A 281-amino-acid chain; its full sequence is Nicotinamide/nicotinic acid mononucleotide adenylyltransferase 1 (281 aa).

Beta-nicotinamide D-ribonucleotide is bound by residues glycine 15 and serine 16. Residues glycine 15, serine 16, phenylalanine 17, and methionine 23 each contribute to the NAD(+) site. 15–17 is a binding site for ATP; that stretch reads GSF. Histidine 24 contributes to the ATP binding site. Beta-nicotinamide D-ribonucleotide-binding residues include tyrosine 55 and lysine 57. NAD(+) is bound at residue lysine 57. Lysine 58 is a binding site for ATP. Beta-nicotinamide D-ribonucleotide-binding residues include tryptophan 92 and threonine 95. Residues tryptophan 92 and threonine 95 each contribute to the NAD(+) site. The disordered stretch occupies residues 113–143; that stretch reads PQQNSPVLEKPGRKRKWAEQKQDISEKKSLE. The residue at position 117 (serine 117) is a Phosphoserine. Positions 123-129 match the Nuclear localization signal motif; sequence PGRKRKW. Residues 129–143 are compositionally biased toward basic and acidic residues; that stretch reads WAEQKQDISEKKSLE. Residues glycine 158, aspartate 160, leucine 170, tryptophan 171, glutamate 217, and asparagine 221 each contribute to the NAD(+) site. Position 158–160 (158–160) interacts with ATP; it reads GAD. Beta-nicotinamide D-ribonucleotide-binding residues include leucine 170 and tryptophan 171. An ATP-binding site is contributed by 226–229; the sequence is TKIR.

Belongs to the eukaryotic NMN adenylyltransferase family. Homohexamer. Interacts with ADPRT/PARP1. The cofactor is Zn(2+). Mg(2+) serves as cofactor.

It localises to the nucleus. The enzyme catalyses beta-nicotinamide D-ribonucleotide + ATP + H(+) = diphosphate + NAD(+). The catalysed reaction is nicotinate beta-D-ribonucleotide + ATP + H(+) = deamido-NAD(+) + diphosphate. It participates in cofactor biosynthesis; NAD(+) biosynthesis; NAD(+) from nicotinamide D-ribonucleotide: step 1/1. Its pathway is cofactor biosynthesis; NAD(+) biosynthesis; deamido-NAD(+) from nicotinate D-ribonucleotide: step 1/1. Activity is strongly inhibited by galotannin. Inhibited by P1-(adenosine-5')-P4-(nicotinic-acid-riboside-5')-tetraphosphate (Nap4AD). In terms of biological role, catalyzes the formation of NAD(+) from nicotinamide mononucleotide (NMN) and ATP. Can also use the deamidated form; nicotinic acid mononucleotide (NaMN) as substrate with the same efficiency. Can use triazofurin monophosphate (TrMP) as substrate. Also catalyzes the reverse reaction, i.e. the pyrophosphorolytic cleavage of NAD(+). For the pyrophosphorolytic activity, prefers NAD(+) and NaAD as substrates and degrades NADH, nicotinic acid adenine dinucleotide phosphate (NHD) and nicotinamide guanine dinucleotide (NGD) less effectively. Involved in the synthesis of ATP in the nucleus, together with PARP1, PARG and NUDT5. Nuclear ATP generation is required for extensive chromatin remodeling events that are energy-consuming. Fails to cleave phosphorylated dinucleotides NADP(+), NADPH and NaADP(+). Also acts as a cofactor for glutamate and aspartate ADP-ribosylation by directing PARP1 catalytic activity to glutamate and aspartate residues on histones. Protects against axonal degeneration following mechanical or toxic insults. Delays axonal degeneration after axotomy. Results in a &gt;10-fold increase in intact neurites 72 hours after injury. Neural protection does not correlate with cellular NAD(+) levels but may still require enzyme activity. The chain is Nicotinamide/nicotinic acid mononucleotide adenylyltransferase 1 (NMNAT1) from Bos taurus (Bovine).